The primary structure comprises 1029 residues: uncharacterized protein (1029 aa).

A compositionally biased stretch (basic and acidic residues) spans 1–23; sequence MREWCMLRESRTNTPRRAAERGK. Residues 1–31 are disordered; it reads MREWCMLRESRTNTPRRAAERGKRPGGSSVR. The Guanylate cyclase domain occupies 39–168; that stretch reads TALCYDLVGS…AALAMAARLQ (130 aa). An ATP-binding site is contributed by 261-268; that stretch reads GDAGIGKS.

This is an uncharacterized protein from Rhizobium meliloti (strain 1021) (Ensifer meliloti).